Here is a 375-residue protein sequence, read N- to C-terminus: Growth/differentiation factor 8 (375 aa).

An N-terminal signal peptide occupies residues 1 to 23; the sequence is MQKLAVYVYIYLFMQIAVDPVAL. The propeptide occupies 24-266; it reads DGSSQPTENA…VTDTPKRSRR (243 aa). An N-linked (GlcNAc...) asparagine glycan is attached at asparagine 71. Intrachain disulfides connect cysteine 272–cysteine 282, cysteine 281–cysteine 340, cysteine 309–cysteine 372, and cysteine 313–cysteine 374.

This sequence belongs to the TGF-beta family. Homodimer; disulfide-linked.

It localises to the secreted. Acts specifically as a negative regulator of skeletal muscle growth. In Gallus gallus (Chicken), this protein is Growth/differentiation factor 8 (MSTN).